The sequence spans 111 residues: Cell cycle protein GpsB (111 aa).

The stretch at 38-72 (IKDYEAFHKEFEQLKQQNARLKRELEEQKLAATQV) forms a coiled coil.

Belongs to the GpsB family. As to quaternary structure, forms polymers through the coiled coil domains. Interacts with PBP1, MreC and EzrA.

The protein localises to the cytoplasm. Functionally, divisome component that associates with the complex late in its assembly, after the Z-ring is formed, and is dependent on DivIC and PBP2B for its recruitment to the divisome. Together with EzrA, is a key component of the system that regulates PBP1 localization during cell cycle progression. Its main role could be the removal of PBP1 from the cell pole after pole maturation is completed. Also contributes to the recruitment of PBP1 to the division complex. Not essential for septum formation. This is Cell cycle protein GpsB from Bacillus cereus (strain ATCC 10987 / NRS 248).